The sequence spans 239 residues: Calcium load-activated calcium channel (239 aa).

The Lumenal portion of the chain corresponds to 1–55 (MPRKRKCDLRAVRVGLLLGGGGVYGSRFRFTFPGCRALSPWRVRVQRRRCEMSTM). A helical membrane pass occupies residues 56-83 (FADTLLIVFISVCTALLAEGITWVLVYR). Residues 83–140 (RTDKYKRLKAEVEKQSKKLEKKKETITESAGRQQKKKIERQEEKLKNNNRDLSMVRMK) adopt a coiled-coil conformation. At 84–137 (TDKYKRLKAEVEKQSKKLEKKKETITESAGRQQKKKIERQEEKLKNNNRDLSMV) the chain is on the cytoplasmic side. Serine 111 is subject to Phosphoserine. The helical transmembrane segment at 138-157 (RMKSMFAIGFCFTALMGMFN) threads the bilayer. The Lumenal segment spans residues 158 to 171 (SIFDGRVVAKLPFT). Residues 172-181 (PLSYIQGLSH) lie within the membrane without spanning it. Over 182–191 (RNLLGDDTTD) the chain is Lumenal. The chain crosses the membrane as a helical span at residues 192 to 213 (CSFIFLYILCTMSIRQNIQKIL). Residues 214–239 (GLAPSRAATKQAGGFLGPPPPSGKFS) lie on the Cytoplasmic side of the membrane. The residue at position 239 (serine 239) is a Phosphoserine.

The protein belongs to the TMCO1 family. As to quaternary structure, homodimer and homotetramer. Homodimer under resting conditions; forms homotetramers following ER calcium overload. Component of the GET- and EMC-like (GEL) complex, composed of RAB5IF/OPTI and TMCO1. The GEL complex is part of the multi-pass translocon (MPT) complex, composed of three subcomplexes, the GEL complex (composed of RAB5IF/OPTI and TMCO1), the BOS complex (composed of NCLN/Nicalin, NOMO and TMEM147) and the PAT complex (composed of WDR83OS/Asterix and CCDC47). The MPT complex associates with the SEC61 complex. In terms of tissue distribution, widely expressed in adult and fetal tissues, with higher levels in thymus, prostate, testis and small intestine and lower levels in brain, placenta, lung and kidney. Present in most tissues in the eye, including the trabecular meshwork and retina (at protein level).

Its subcellular location is the endoplasmic reticulum membrane. The protein resides in the golgi apparatus membrane. It is found in the mitochondrion membrane. It carries out the reaction Ca(2+)(in) = Ca(2+)(out). Endoplasmic reticulum (ER) calcium-selective channel preventing intracellular Ca2(+) stores from overfilling and maintaining calcium homeostasis in the ER. In response to endoplasmic reticulum (ER) Ca2(+) overloading, assembles into a homotetramer, forming a functional calcium-selective channel facilitating Ca2(+) release. Mediates ER Ca2(+) homeostasis in osteoblasts and plays a key role in bone formation, via the CaMKII-HDAC4-RUNX2 signaling axis. Component of the multi-pass translocon (MPT) complex that mediates insertion of multi-pass membrane proteins into the lipid bilayer of membranes. The MPT complex takes over after the SEC61 complex: following membrane insertion of the first few transmembrane segments of proteins by the SEC61 complex, the MPT complex occludes the lateral gate of the SEC61 complex to promote insertion of subsequent transmembrane regions. Within the MPT complex, the GEL subcomplex may mediate insertion of transmembrane regions into the membrane. The sequence is that of Calcium load-activated calcium channel from Homo sapiens (Human).